Reading from the N-terminus, the 263-residue chain is uncharacterized protein (263 aa).

Lys12 to Thr19 contacts ATP.

Belongs to the ParA family. MinD subfamily.

This is an uncharacterized protein from Methanocaldococcus jannaschii (strain ATCC 43067 / DSM 2661 / JAL-1 / JCM 10045 / NBRC 100440) (Methanococcus jannaschii).